The following is a 725-amino-acid chain: Eukaryotic elongation factor 2 kinase (725 aa).

Residues 1 to 12 (MADEDLIFRLEG) show a composition bias toward basic and acidic residues. The interval 1 to 38 (MADEDLIFRLEGVDGGQSPRAGHDGDSDGDSDDEEGYF) is disordered. An N-acetylalanine modification is found at alanine 2. Serine 18 and serine 27 each carry phosphoserine. Acidic residues predominate over residues 27-36 (SDGDSDDEEG). Phosphoserine; by autocatalysis occurs at positions 61 and 66. Residues serine 70, serine 71, serine 72, and serine 74 each carry the phosphoserine modification. Residue serine 78 is modified to Phosphoserine; by autocatalysis and TRPM7. The calmodulin-binding stretch occupies residues 81-94 (FKEAWKHAIQKAKH). The Alpha-type protein kinase domain occupies 116–326 (RYNAVTGEWL…ICESMGLAPF (211 aa)). Serine 243 is modified (phosphoserine). 296–302 (GDGNLGV) is a binding site for ATP. 2 positions are modified to phosphothreonine; by autocatalysis: threonine 348 and threonine 353. Disordered stretches follow at residues 352–405 (GTEE…PHSQ) and 423–477 (SRDH…SLGS). A Phosphoserine; by MAPK13 and CDK1 modification is found at serine 359. Low complexity predominate over residues 363 to 377 (RTLSGSRPPLLRPLS). Serine 366 carries the phosphoserine; by autocatalysis, RPS6KA1 and RPS6KB1 modification. The segment covering 386–404 (SDVTFDSLPSSPSSATPHS) has biased composition (polar residues). Serine 392 carries the phosphoserine modification. Serine 398 is modified (phosphoserine; by AMPK). Basic and acidic residues-rich tracts occupy residues 423–436 (SRDH…RESE) and 445–469 (SEKR…RKYE). Serine 435 carries the post-translational modification Phosphoserine. Serine 445 carries the phosphoserine; by autocatalysis modification. Serine 470 bears the Phosphoserine mark. Serine 474 bears the Phosphoserine; by autocatalysis mark. At serine 477 the chain carries Phosphoserine. A Phosphoserine; by autocatalysis modification is found at serine 491. Serine 500 carries the phosphoserine; by PKA modification.

Belongs to the protein kinase superfamily. Alpha-type protein kinase family. In terms of assembly, monomer or homodimer. Interacts with Calmodulin/CALM1; this interaction is strictly required for phosphorylation activity. In terms of processing, autophosphorylated at multiple residues, Thr-348 being the major site. Phosphorylated by AMP-activated protein kinase AMPK at Ser-398 leading to EEF2K activation and protein synthesis inhibition. Phosphorylated by TRPM7 at Ser-78 resulting in improved protein stability, higher EE2F phosphorylated and subsequently reduced rate of protein synthesis. Phosphorylation by other kinases such as CDK1 and MAPK13 at Ser-359 or RPS6KA1 and RPS6KB1 at Ser-366 instead decrease EEF2K activity and promote protein synthesis.

The catalysed reaction is [translation elongation factor 2] + ATP = [translation elongation factor 2]-phosphate + ADP + H(+). Its activity is regulated as follows. Undergoes calcium/calmodulin-dependent intramolecular autophosphorylation, and this results in it becoming partially calcium/calmodulin-independent. Threonine kinase that regulates protein synthesis by controlling the rate of peptide chain elongation. Upon activation by a variety of upstream kinases including AMPK or TRPM7, phosphorylates the elongation factor EEF2 at a single site, renders it unable to bind ribosomes and thus inactive. In turn, the rate of protein synthesis is reduced. This is Eukaryotic elongation factor 2 kinase (EEF2K) from Homo sapiens (Human).